Consider the following 122-residue polypeptide: UPF0102 protein CKL_1410 (122 aa).

It belongs to the UPF0102 family.

This Clostridium kluyveri (strain ATCC 8527 / DSM 555 / NBRC 12016 / NCIMB 10680 / K1) protein is UPF0102 protein CKL_1410.